A 346-amino-acid polypeptide reads, in one-letter code: Elongation factor Ts (346 aa).

An involved in Mg(2+) ion dislocation from EF-Tu region spans residues 80–83 (TDFV).

This sequence belongs to the EF-Ts family.

It localises to the cytoplasm. Its function is as follows. Associates with the EF-Tu.GDP complex and induces the exchange of GDP to GTP. It remains bound to the aminoacyl-tRNA.EF-Tu.GTP complex up to the GTP hydrolysis stage on the ribosome. This Streptococcus pyogenes serotype M18 (strain MGAS8232) protein is Elongation factor Ts.